The primary structure comprises 273 residues: 2,3,4,5-tetrahydropyridine-2,6-dicarboxylate N-succinyltransferase (273 aa).

The substrate site is built by Arg-104 and Asp-141.

The protein belongs to the transferase hexapeptide repeat family. As to quaternary structure, homotrimer.

The protein resides in the cytoplasm. It carries out the reaction (S)-2,3,4,5-tetrahydrodipicolinate + succinyl-CoA + H2O = (S)-2-succinylamino-6-oxoheptanedioate + CoA. It functions in the pathway amino-acid biosynthesis; L-lysine biosynthesis via DAP pathway; LL-2,6-diaminopimelate from (S)-tetrahydrodipicolinate (succinylase route): step 1/3. This chain is 2,3,4,5-tetrahydropyridine-2,6-dicarboxylate N-succinyltransferase, found in Neisseria meningitidis serogroup B (strain ATCC BAA-335 / MC58).